The primary structure comprises 376 residues: Dihydroorotate dehydrogenase (quinone) (376 aa).

FMN-binding positions include 78-82 (AGFDK) and threonine 102. A substrate-binding site is contributed by lysine 82. Residue 127 to 131 (NRMGF) coordinates substrate. FMN is bound by residues asparagine 157 and asparagine 190. Residue asparagine 190 participates in substrate binding. Serine 193 functions as the Nucleophile in the catalytic mechanism. Asparagine 195 is a binding site for substrate. Residues lysine 228 and threonine 256 each coordinate FMN. 257–258 (NT) contacts substrate. FMN contacts are provided by residues glycine 286, glycine 315, and 336–337 (YT).

This sequence belongs to the dihydroorotate dehydrogenase family. Type 2 subfamily. In terms of assembly, monomer. Requires FMN as cofactor.

The protein localises to the cell membrane. It carries out the reaction (S)-dihydroorotate + a quinone = orotate + a quinol. It participates in pyrimidine metabolism; UMP biosynthesis via de novo pathway; orotate from (S)-dihydroorotate (quinone route): step 1/1. Catalyzes the conversion of dihydroorotate to orotate with quinone as electron acceptor. The polypeptide is Dihydroorotate dehydrogenase (quinone) (Nostoc sp. (strain PCC 7120 / SAG 25.82 / UTEX 2576)).